A 637-amino-acid chain; its full sequence is Biosynthetic arginine decarboxylase (637 aa).

N6-(pyridoxal phosphate)lysine is present on Lys101. A substrate-binding site is contributed by Phe286–Tyr296.

The protein belongs to the Orn/Lys/Arg decarboxylase class-II family. SpeA subfamily. Mg(2+) is required as a cofactor. Pyridoxal 5'-phosphate serves as cofactor.

The catalysed reaction is L-arginine + H(+) = agmatine + CO2. It participates in amine and polyamine biosynthesis; agmatine biosynthesis; agmatine from L-arginine: step 1/1. Functionally, catalyzes the biosynthesis of agmatine from arginine. This chain is Biosynthetic arginine decarboxylase, found in Shewanella halifaxensis (strain HAW-EB4).